A 960-amino-acid chain; its full sequence is Glycine dehydrogenase (decarboxylating) (960 aa).

The residue at position 709 (Lys-709) is an N6-(pyridoxal phosphate)lysine.

Belongs to the GcvP family. As to quaternary structure, the glycine cleavage system is composed of four proteins: P, T, L and H. It depends on pyridoxal 5'-phosphate as a cofactor.

It catalyses the reaction N(6)-[(R)-lipoyl]-L-lysyl-[glycine-cleavage complex H protein] + glycine + H(+) = N(6)-[(R)-S(8)-aminomethyldihydrolipoyl]-L-lysyl-[glycine-cleavage complex H protein] + CO2. Functionally, the glycine cleavage system catalyzes the degradation of glycine. The P protein binds the alpha-amino group of glycine through its pyridoxal phosphate cofactor; CO(2) is released and the remaining methylamine moiety is then transferred to the lipoamide cofactor of the H protein. The polypeptide is Glycine dehydrogenase (decarboxylating) (Edwardsiella ictaluri (strain 93-146)).